A 2167-amino-acid polypeptide reads, in one-letter code: SH3 and multiple ankyrin repeat domains protein 1 (2167 aa).

The tract at residues 1–63 is disordered; the sequence is MTHSPATSED…TRGLQGRSMS (63 aa). Low complexity predominate over residues 17–32; the sequence is SECPEGGSESDSSPDG. The span at 33-47 shows a compositional bias: gly residues; the sequence is PGRGPQGTRGRGSGA. Arginine 43 is modified (omega-N-methylarginine). Phosphotyrosine is present on tyrosine 186. ANK repeat units lie at residues 212-242, 246-275, 279-309, 313-342, 346-375, and 379-407; these read SGET…HIDF, DGMT…SPNY, RGLT…QLGI, NGWQ…EPGA, SGNT…NKDV, and NGQT…EQDV. Disordered stretches follow at residues 413-432 and 454-546; these read SPKY…TVPP and PGAS…SRGR. Over residues 454-479 the composition is skewed to low complexity; it reads PGASSSGTPGPTSGSQGQSQPSAPST. Residues 527-542 show a composition bias toward gly residues; the sequence is PAGGTGGSGGPGGSLG. Residue serine 540 is modified to Phosphoserine. Arginine 544 is modified (omega-N-methylarginine). The SH3 domain occupies 554 to 613; sequence VPGRSFMAVKSYQAQGEGEISLSKGEKIKVLSIGEGGFWEGQVKGRVGWFPSDCLEEVAN. The PDZ domain maps to 663 to 757; sequence TVLLQKKDSE…TLMVKVVMVT (95 aa). Serine 671 and serine 791 each carry phosphoserine. A disordered region spans residues 841–894; sequence ISASESPGPGGLASLGKHRPKGFFATESSFDPHHRSQPSYDRPSFLPPGPGLML. Serine 898 carries the post-translational modification Phosphoserine. 2 disordered regions span residues 917–1233 and 1245–1290; these read SRSL…LDFT and RREG…RHSK. Residues 928–947 are compositionally biased toward pro residues; it reads IPPPPTTSPPEPPYSTPPAP. Omega-N-methylarginine is present on arginine 958. Positions 969-980 are enriched in low complexity; sequence PLPASSPSSFDG. Basic residues predominate over residues 1004-1028; it reads AHHHPPHHHHHHAPPPQPHHHHAHP. Arginine 1059 bears the Omega-N-methylarginine mark. Positions 1064–1089 are enriched in low complexity; it reads SPTSGAPSPSHHSSSGGSSGPAQAPA. Arginine 1098 and arginine 1109 each carry omega-N-methylarginine. Composition is skewed to low complexity over residues 1132–1146 and 1171–1184; these read SLPP…ALPR and STSS…GSST. Positions 1203–1224 are enriched in pro residues; it reads SPAPATSPVPPSPSPVPTPASP. Residues 1245–1256 show a composition bias toward basic and acidic residues; it reads RREGGWQNEARR. Asymmetric dimethylarginine is present on arginine 1257. Residue serine 1291 is modified to Phosphoserine. Disordered regions lie at residues 1308 to 1331, 1361 to 1417, 1429 to 1458, 1500 to 1725, 1740 to 1790, 1828 to 1866, 1898 to 1988, and 2002 to 2029; these read GGSS…GSSS, LAAR…VLRL, RAGL…PPTA, FLEN…AGVA, GQAF…TPTS, VPPV…QPQA, PWAR…STRH, and RRAP…LPIL. The segment covering 1363–1372 has biased composition (basic and acidic residues); that stretch reads ARERALKESS. The segment covering 1378 to 1395 has biased composition (pro residues); it reads PQPPPRPPSPRYDAPPPT. Positions 1396-1408 are enriched in basic residues; it reads LHHHSPHSPHSPH. Omega-N-methylarginine is present on arginine 1429. Residue serine 1442 is modified to Phosphoserine. Positions 1530–1541 are enriched in low complexity; it reads RRVLPTSPTSPR. The segment covering 1589 to 1615 has biased composition (pro residues); that stretch reads PLTPGPPHPLPDPPSPATPLPAAPPPA. Polar residues predominate over residues 1624-1641; the sequence is DSTASSLTSYDSEVATLT. Residues 1648–1676 are compositionally biased toward pro residues; sequence PGDPPAPGPPAPAAPAPPAPQPGPDPPPG. Positions 1684–1694 are enriched in basic and acidic residues; that stretch reads VDSRSSSDHPL. Low complexity predominate over residues 1695–1708; sequence ETISSASTLSSLSA. The segment covering 1709-1724 has biased composition (gly residues); that stretch reads EGGGNTGGVAGGGAGV. Positions 1850-1861 are enriched in pro residues; the sequence is PGPPPPPLPGPL. Position 1901 is an omega-N-methylarginine (arginine 1901). 3 stretches are compositionally biased toward low complexity: residues 1934–1945, 1960–1985, and 2002–2012; these read SQTSLLSKPSSS, TGSG…ASAS, and RRAPSPSLLPA. Omega-N-methylarginine is present on residues arginine 2022, arginine 2042, and arginine 2080. The SAM domain maps to 2104–2167; that stretch reads WTKFDVADWL…DRALKFFLER (64 aa).

Belongs to the SHANK family. As to quaternary structure, may homomultimerize via its SAM domain. Interacts with the C-terminus of SSTR2 via the PDZ domain. Interacts with SHARPIN, SPTAN1, HOMER1 and DLGAP1/GKAP. Part of a complex with DLG4/PSD-95 and DLGAP1/GKAP. Interacts with BAIAP2. Interacts with IGSF9. Interacts with HOMER1 and HOMER3. As to expression, in brain, highly expressed in cortex, hippocampus and cerebellum.

It is found in the cytoplasm. It localises to the synapse. The protein resides in the postsynaptic density. Its function is as follows. Seems to be an adapter protein in the postsynaptic density (PSD) of excitatory synapses that interconnects receptors of the postsynaptic membrane including NMDA-type and metabotropic glutamate receptors, and the actin-based cytoskeleton. Plays a role in the structural and functional organization of the dendritic spine and synaptic junction. Overexpression promotes maturation of dendritic spines and the enlargement of spine heads via its ability to recruit Homer to postsynaptic sites, and enhances presynaptic function. The protein is SH3 and multiple ankyrin repeat domains protein 1 (Shank1) of Mus musculus (Mouse).